We begin with the raw amino-acid sequence, 652 residues long: Acetyl-coenzyme A synthetase (652 aa).

CoA-binding positions include 191-194 (RAGR), threonine 311, and asparagine 335. ATP is bound by residues 387–389 (GEP), 411–416 (DTWWQT), aspartate 500, and arginine 515. A CoA-binding site is contributed by serine 523. An ATP-binding site is contributed by arginine 526. Residues valine 537, histidine 539, and isoleucine 542 each contribute to the Mg(2+) site. Position 584 (arginine 584) interacts with CoA. Lysine 609 is subject to N6-acetyllysine.

It belongs to the ATP-dependent AMP-binding enzyme family. Requires Mg(2+) as cofactor. Post-translationally, acetylated. Deacetylation by the SIR2-homolog deacetylase activates the enzyme.

The catalysed reaction is acetate + ATP + CoA = acetyl-CoA + AMP + diphosphate. Catalyzes the conversion of acetate into acetyl-CoA (AcCoA), an essential intermediate at the junction of anabolic and catabolic pathways. Acs undergoes a two-step reaction. In the first half reaction, Acs combines acetate with ATP to form acetyl-adenylate (AcAMP) intermediate. In the second half reaction, it can then transfer the acetyl group from AcAMP to the sulfhydryl group of CoA, forming the product AcCoA. Its function is as follows. Enables the cell to use acetate during aerobic growth to generate energy via the TCA cycle, and biosynthetic compounds via the glyoxylate shunt. Acetylates CheY, the response regulator involved in flagellar movement and chemotaxis. The protein is Acetyl-coenzyme A synthetase of Salmonella typhi.